The primary structure comprises 61 residues: Small ribosomal subunit protein eS30A (61 aa).

Positions 1-36 (MGKVHGSLARAGKVKSQTPKVEKQEKPKQPKGRAYK) are disordered.

Belongs to the eukaryotic ribosomal protein eS30 family. As to quaternary structure, component of the small ribosomal subunit (SSU). Mature yeast ribosomes consist of a small (40S) and a large (60S) subunit. The 40S small subunit contains 1 molecule of ribosomal RNA (18S rRNA) and at least 33 different proteins. The large 60S subunit contains 3 rRNA molecules (25S, 5.8S and 5S rRNA) and at least 46 different proteins.

Its subcellular location is the cytoplasm. It is found in the nucleus. Component of the ribosome, a large ribonucleoprotein complex responsible for the synthesis of proteins in the cell. The small ribosomal subunit (SSU) binds messenger RNAs (mRNAs) and translates the encoded message by selecting cognate aminoacyl-transfer RNA (tRNA) molecules. The large subunit (LSU) contains the ribosomal catalytic site termed the peptidyl transferase center (PTC), which catalyzes the formation of peptide bonds, thereby polymerizing the amino acids delivered by tRNAs into a polypeptide chain. The nascent polypeptides leave the ribosome through a tunnel in the LSU and interact with protein factors that function in enzymatic processing, targeting, and the membrane insertion of nascent chains at the exit of the ribosomal tunnel. In Schizosaccharomyces pombe (strain 972 / ATCC 24843) (Fission yeast), this protein is Small ribosomal subunit protein eS30A (rps3001).